Here is a 386-residue protein sequence, read N- to C-terminus: MANEVYANNMEISCKAANGKSIAAFPDVCFTPPQAPPTPLGVPIPYPNTGLSKDTTKGTRTIRITRKEVMLKNKSYYKTSYGDEPGRAPKKGIVTSKIKGKVYFTSWSMNVKFESKNVVRHLDLTTHNHASFPGNTPVWPYLDQATVDAGGGPCSNEVKKEKKDCADFKPHGSKDACAGLGAGKPSGKKTSNEADRLADKVAARKCLTARRCALQPYKPNSCCPQQTAHHLIEASALHDKGRGGKGSVPLKGISNYSENKAPCVCAEGVNQNVGTHGLMHTFQSAAAAKSRSGTLQLSNGSSISAKKTTYGTAKRQSMAAMGKVFPQSKCSKECLSAQLDNYHKQCGINARTPIKAVETGQTDVTAATQAIKTRNARLGATRSRVR.

As to quaternary structure, interacts with Tsi7.

It catalyses the reaction Endonucleolytic cleavage to 5'-phosphodinucleotide and 5'-phosphooligonucleotide end-products.. Its function is as follows. Type VI secretion exported toxin that via to its DNase activity induces growth arrest and ultimately DNA degradation within target cell. The activity is initially neutralized by a cognate immunity protein Tsi7. This chain is DNase toxin Tse7, found in Pseudomonas aeruginosa (strain ATCC 15692 / DSM 22644 / CIP 104116 / JCM 14847 / LMG 12228 / 1C / PRS 101 / PAO1).